The primary structure comprises 129 residues: Small ribosomal subunit protein uS11 (129 aa).

This sequence belongs to the universal ribosomal protein uS11 family. Part of the 30S ribosomal subunit. Interacts with proteins S7 and S18. Binds to IF-3.

Its function is as follows. Located on the platform of the 30S subunit, it bridges several disparate RNA helices of the 16S rRNA. Forms part of the Shine-Dalgarno cleft in the 70S ribosome. The polypeptide is Small ribosomal subunit protein uS11 (Vibrio atlanticus (strain LGP32) (Vibrio splendidus (strain Mel32))).